Consider the following 490-residue polypeptide: Betaine aldehyde dehydrogenase (490 aa).

Aspartate 93 is a binding site for K(+). Residue 150-152 participates in NAD(+) binding; it reads GAW. The active-site Charge relay system is lysine 162. Residue 176 to 179 participates in NAD(+) binding; it reads KPSE. K(+) is bound at residue valine 180. An NAD(+)-binding site is contributed by 230-233; that stretch reads GIAS. Leucine 246 is a binding site for K(+). The Proton acceptor role is filled by glutamate 252. NAD(+) contacts are provided by glycine 254, cysteine 286, and glutamate 387. Cysteine 286 serves as the catalytic Nucleophile. Cysteine 286 carries the post-translational modification Cysteine sulfenic acid (-SOH). Positions 457 and 460 each coordinate K(+). The Charge relay system role is filled by glutamate 464.

Belongs to the aldehyde dehydrogenase family. As to quaternary structure, dimer of dimers. It depends on K(+) as a cofactor.

It carries out the reaction betaine aldehyde + NAD(+) + H2O = glycine betaine + NADH + 2 H(+). Its pathway is amine and polyamine biosynthesis; betaine biosynthesis via choline pathway; betaine from betaine aldehyde: step 1/1. In terms of biological role, involved in the biosynthesis of the osmoprotectant glycine betaine. Catalyzes the irreversible oxidation of betaine aldehyde to the corresponding acid. In Pectobacterium atrosepticum (strain SCRI 1043 / ATCC BAA-672) (Erwinia carotovora subsp. atroseptica), this protein is Betaine aldehyde dehydrogenase.